The chain runs to 976 residues: 3-O-beta-L-arabinopyranosyl-alpha-L-arabinofuranosidase (976 aa).

The N-terminal stretch at 1-28 is a signal peptide; it reads MSHRNKALVAIVAGTALLISSGAAIGQA. Glutamate 190 (proton donor) is an active-site residue. Catalysis depends on glutamate 315, which acts as the Nucleophile. The 136-residue stretch at 519–654 folds into the CBM6 domain; it reads LLVEEVENTV…DNTLDKFLLY (136 aa).

Belongs to the glycosyl hydrolase 39 family.

It localises to the secreted. It catalyses the reaction Hydrolysis of beta-L-Arap-(1-&gt;3)-L-Araf disaccharides from non-reducing terminals in branches of type II arabinogalactan attached to proteins.. In terms of biological role, hydrolase involved in the degradation of the gum arabic arabinogalactan protein (AGP) and larch AGP. Catalyzes the release of 3-O-beta-L-arabinopyranosyl-L-arabinose (beta-L-Arap-(1-&gt;3)-L-Ara) from gum arabic AGP and larch AGP. Also cleaves a small amount of beta-L-Arap-(1-&gt;3)-L-Ara from sugar beet arabinan, but wheat AGP cannot be used as a substrate. Can also release 3-O-alpha-D-galactopyranosyl-L-arabinose (alpha-D-Galp-(1-&gt;3)-L-Ara) from gum arabic AGP, with low efficiency. This is 3-O-beta-L-arabinopyranosyl-alpha-L-arabinofuranosidase from Bifidobacterium pseudocatenulatum.